The sequence spans 336 residues: Putative bifunctional cytochrome c-type biogenesis protein CcmAE (336 aa).

The segment at 1-199 is cytochrome c biogenesis ATP-binding export protein CcmA 2; it reads MLEARDLYCE…ADTVRRLALT (199 aa). The 241-residue stretch at 2 to 242 folds into the ABC transporter domain; it reads LEARDLYCER…VGQRLRVGGM (241 aa). 34–41 is a binding site for ATP; that stretch reads GGNGAGKT. The segment at 196-336 is cytochrome c-type biogenesis protein CcmE 2; it reads LALTTALVLY…PQRVDKDTSS (141 aa). Residues H307 and Y311 each coordinate heme. The interval 307–336 is disordered; it reads HDENYTPPEVEKAMQENHRRPQRVDKDTSS.

In the N-terminal section; belongs to the ABC transporter superfamily. CcmA exporter (TC 3.A.1.107) family. It in the C-terminal section; belongs to the CcmE/CycJ family.

It is found in the cell inner membrane. It catalyses the reaction heme b(in) + ATP + H2O = heme b(out) + ADP + phosphate + H(+). Part of the ABC transporter complex CcmAB involved in the biogenesis of c-type cytochromes; once thought to export heme, this seems not to be the case, but its exact role is uncertain. Responsible for energy coupling to the transport system. Its function is as follows. Heme chaperone required for the biogenesis of c-type cytochromes. Transiently binds heme delivered by CcmC and transfers the heme to apo-cytochromes in a process facilitated by CcmF and CcmH. The protein is Putative bifunctional cytochrome c-type biogenesis protein CcmAE (ccmAE) of Salmonella choleraesuis (strain SC-B67).